Consider the following 553-residue polypeptide: Pumilio domain-containing protein 5 (553 aa).

Pumilio repeat units lie at residues 146-184, 185-223, 224-260, 261-296, 297-335, 347-384, 386-421, and 432-472; these read DVVSNGSLIDFAMDRTGVKFLERHFPEDHDNEMHFVLFD, KLTEQGAVFTSLCRSAAGNFIIQKFVEHATLDEQERLVR, KMCDNGLIEMCLDKFACRVVQMSIQKFDVSIAMKLVE, KISSLDFLPLCTDQCAIHVLQKVVKLLPISAWSFFV, KFLCRDDNLMTVCQDKYGCRLVQQTIDKLSDNPKLHCFN, SVARNCFRLSSNEFANYVVQYVIKSSGVMEMYRDTIIE, CLLRNILSMSQDKYASHVVEGAFLFAPPLLLSEMMD, and ETNR…KMVA. The interval 499 to 514 is RNA-binding; it reads FSSGKKIIESLQKLNV.

Detected in differentiating oocytes with highest levels observed in developing ooctyes in the distal portion of the proximal gonad.

Its subcellular location is the cytoplasm. The protein localises to the P-body. RNA-binding protein that binds to the consensus sequence 5'-CUCUGUAUCUUGU-3' in mRNA 3'-UTRs and modulates mRNA expression and stability. Functions redundantly with puf-6 and puf-7 in oocyte formation and organization, early embryonic cell divisions, and repression of expression of glp-1 and other maternal mRNAs in late oogenesis. This is Pumilio domain-containing protein 5 from Caenorhabditis elegans.